The sequence spans 148 residues: MSEQEGKNEKKVTEGQWTTGLYDCLSEDISTCCFTWVCPCVAFGRIAEILDKGETSRGLAGLMVVAMSSIGCGWYYASKYRAKLRHQYALPEAPCADGAIHCFCCPCALTQEHRELKHRGLDPSLGWNIENGGLNSNTPPFVASGMDR.

A helical transmembrane segment spans residues 59–78; that stretch reads LAGLMVVAMSSIGCGWYYAS.

The protein belongs to the cornifelin family.

It is found in the membrane. Functionally, may be involved in cadmium resistance. The chain is Protein PLANT CADMIUM RESISTANCE 9 (PCR9) from Arabidopsis thaliana (Mouse-ear cress).